The chain runs to 140 residues: Large ribosomal subunit protein uL14 (140 aa).

This sequence belongs to the universal ribosomal protein uL14 family.

The chain is Large ribosomal subunit protein uL14 (rpl-23) from Caenorhabditis elegans.